A 153-amino-acid chain; its full sequence is Insulin-like growth factor 1 (153 aa).

Residues 49 to 77 (GPETLCGAELVDALQFVCGPRGFYFNKPT) are b. Intrachain disulfides connect cysteine 54–cysteine 96, cysteine 66–cysteine 109, and cysteine 95–cysteine 100. Residues 78–89 (GYGSSIRRAPQT) form a c region. An a region spans residues 90-110 (GIVDECCFRSCDLRRLEMYCA). Residues 111–118 (PLKPTKAA) are d. A propeptide spans 119 to 153 (RSIRAQRHTDMPKTQKEVHLKNTSRGSAGNKTYRM) (e peptide). The segment at 120–153 (SIRAQRHTDMPKTQKEVHLKNTSRGSAGNKTYRM) is disordered. The segment covering 125–138 (RHTDMPKTQKEVHL) has biased composition (basic and acidic residues). The span at 139–153 (KNTSRGSAGNKTYRM) shows a compositional bias: polar residues.

It belongs to the insulin family. In terms of assembly, forms a ternary complex with IGFR1 and ITGAV:ITGB3. Forms a ternary complex with IGFR1 and ITGA6:ITGB4. Interacts with SH2D3C isoform 2. Forms a ternary complex with IGFBP3 and ALS.

It is found in the secreted. Its function is as follows. The insulin-like growth factors, isolated from plasma, are structurally and functionally related to insulin but have a much higher growth-promoting activity. May be a physiological regulator of [1-14C]-2-deoxy-D-glucose (2DG) transport and glycogen synthesis in osteoblasts. Stimulates glucose transport in bone-derived osteoblastic (PyMS) cells and is effective at much lower concentrations than insulin, not only regarding glycogen and DNA synthesis but also with regard to enhancing glucose uptake. May play a role in synapse maturation. Ca(2+)-dependent exocytosis of IGF1 is required for sensory perception of smell in the olfactory bulb. Acts as a ligand for IGF1R. Binds to the alpha subunit of IGF1R, leading to the activation of the intrinsic tyrosine kinase activity which autophosphorylates tyrosine residues in the beta subunit thus initiating a cascade of down-stream signaling events leading to activation of the PI3K-AKT/PKB and the Ras-MAPK pathways. Binds to integrins ITGAV:ITGB3 and ITGA6:ITGB4. Its binding to integrins and subsequent ternary complex formation with integrins and IGFR1 are essential for IGF1 signaling. Induces the phosphorylation and activation of IGFR1, MAPK3/ERK1, MAPK1/ERK2 and AKT1. As part of the MAPK/ERK signaling pathway, acts as a negative regulator of apoptosis in cardiomyocytes via promotion of STUB1/CHIP-mediated ubiquitination and degradation of ICER-type isoforms of CREM. The polypeptide is Insulin-like growth factor 1 (Mus musculus (Mouse)).